The chain runs to 90 residues: MAAVKFLVCSVLLVVLATQSEIGLAQNCSAAIGGLMSCGPYVLPGNQLTPSTQCCSAIQAVNHGCLCETINIISSLPGHCSLPPVSCGTA.

Residues 1-26 (MAAVKFLVCSVLLVVLATQSEIGLAQ) form the signal peptide. 4 disulfide bridges follow: cysteine 28/cysteine 65, cysteine 38/cysteine 54, cysteine 55/cysteine 80, and cysteine 67/cysteine 87.

This sequence belongs to the A9/FIL1 family.

The protein resides in the secreted. The chain is Protein LIM3 (LIM3) from Lilium longiflorum (Trumpet lily).